We begin with the raw amino-acid sequence, 358 residues long: MFDQLDIVEERYEQLNELLSDPDVVNDSDKLRKYSKEQADLQKTVDVYRNYKAKKEELADIEEMLSETDDKEEVEMLKEESSGIKAELPNLEEELKILLIPKDPNDDKDVIVEIRAAAGGDEAAIFAGDLMRMYSKYAESQGFKTEIVEASESDHGGYKEISFSVSGNGAYSKLKFENGAHRVQRVPETESGGRIHTSTATVAVLPEVEDVEIEIRNEDLKIDTYRSSGAGGQHVNTTDSAVRITHLPTGVIATSSEKSQIQNREKAMKVLKARLYDMKVQEEQQKYASQRKSAVGTGDRSERIRTYNYPQSRVTDHRIGLTLQKLGQIMEGHLEEIIDALTLSEQTDKLKELNNGEL.

Glutamine 233 bears the N5-methylglutamine mark.

This sequence belongs to the prokaryotic/mitochondrial release factor family. Methylated by PrmC. Methylation increases the termination efficiency of RF1.

Its subcellular location is the cytoplasm. In terms of biological role, peptide chain release factor 1 directs the termination of translation in response to the peptide chain termination codons UAG and UAA. The polypeptide is Peptide chain release factor 1 (Staphylococcus aureus (strain MRSA252)).